The chain runs to 107 residues: Large ribosomal subunit protein bL21 (107 aa).

This sequence belongs to the bacterial ribosomal protein bL21 family. In terms of assembly, part of the 50S ribosomal subunit. Contacts protein L20.

In terms of biological role, this protein binds to 23S rRNA in the presence of protein L20. This chain is Large ribosomal subunit protein bL21, found in Chlamydia muridarum (strain MoPn / Nigg).